Here is a 1023-residue protein sequence, read N- to C-terminus: Presequence protease, mitochondrial (1023 aa).

The N-terminal 62 residues, 1-62, are a transit peptide targeting the mitochondrion; the sequence is MFRQSKTIIT…PDLFLTAVKL (62 aa). Histidine 99 contacts Zn(2+). Catalysis depends on glutamate 102, which acts as the Proton acceptor. Residues histidine 103 and glutamate 200 each coordinate Zn(2+). Cysteine 114 and cysteine 551 are disulfide-bonded.

This sequence belongs to the peptidase M16 family. PreP subfamily. As to quaternary structure, monomer and homodimer; homodimerization is induced by binding of the substrate. The cofactor is Zn(2+). Post-translationally, a disulfide bond locks the enzyme in the closed conformation preventing substrate entry into the catalytic chamber.

The protein localises to the mitochondrion matrix. Its activity is regulated as follows. Mainly exists in a closed and catalytically competent conformation but a closed-to-open switch allows substrate entry into the catalytic chamber. Substrate binding induces closure and dimerization. A disulfide bond may lock the enzyme in a closed conformation preventing substrate entry into the catalytic chamber, participating in redox regulation of the enzyme. Inhibited by metal-chelating agents. Inhibited by nickel and zinc excess, and slightly activated by manganese. In terms of biological role, metalloendopeptidase of the mitochondrial matrix that functions in peptide cleavage and degradation rather than in protein processing. Has an ATP-independent activity. Specifically cleaves peptides in the range of 5 to 65 residues. Shows a preference for cleavage after small polar residues and before basic residues, but without any positional preference. Degrades the transit peptides of mitochondrial proteins after their cleavage. Also degrades other unstructured peptides. This chain is Presequence protease, mitochondrial (pitrm1), found in Danio rerio (Zebrafish).